We begin with the raw amino-acid sequence, 901 residues long: Pantothenate kinase 2 (901 aa).

Over residues 1–10 (MAGQEDEYDP) the composition is skewed to acidic residues. The tract at residues 1–50 (MAGQEDEYDPILDNKREAEAKSQVSVAADKNMAPSTSGTPIHRSGSRPQL) is disordered. The segment at 1–466 (MAGQEDEYDP…LGDLDEKISW (466 aa)) is pantothenate kinase. The segment at 467–901 (MEKFVRRGTE…CVCRYEPPSL (435 aa)) is 4'-phosphopantetheine phosphatase. Residues Asp-731, Asn-732, and Asp-767 each contribute to the Mn(2+) site. Positions 851–855 (EGMGR) match the Subfamily II EGMGR motif motif.

The protein in the N-terminal section; belongs to the type II pantothenate kinase family. This sequence in the C-terminal section; belongs to the damage-control phosphatase family. Phosphopantetheine phosphatase II subfamily. Mn(2+) serves as cofactor. The cofactor is Ni(2+). As to expression, highly expressed in leaves and developing seeds. Expressed in roots, stems and flowers.

The enzyme catalyses (R)-pantothenate + ATP = (R)-4'-phosphopantothenate + ADP + H(+). It carries out the reaction (R)-4'-phosphopantothenate + H2O = (R)-pantothenate + phosphate. It catalyses the reaction (R)-4'-phosphopantetheine + H2O = (R)-pantetheine + phosphate. The catalysed reaction is (R)-4'-phosphopantetheine sulfonate + H2O = (R)-pantetheine sulfonate + phosphate. Its pathway is cofactor biosynthesis; coenzyme A biosynthesis; CoA from (R)-pantothenate: step 1/5. Its activity is regulated as follows. Activity is strongly promoted by Co(2+), Ni(2+) and Mn(2+). Activity is inhibited by EDTA. Functionally, catalyzes the phosphorylation of pantothenate the first step in CoA biosynthesis. May play a role in the physiological regulation of the intracellular CoA concentration. Functionally redudant with PANK1. The phosphatase activity shows preference for normal or oxidatively damaged intermediates of 4'-phosphopantetheine, which provides strong indirect evidence that the phosphatase activity pre-empts damage in the CoA pathway. Hydrolyzing excess 4'-phosphopantetheine could constitute a directed overflow mechanism to prevent its oxidation to the S-sulfonate, sulfonate, or other forms. Hydrolyzing 4'-phosphopantetheine sulfonate or S-sulfonate would forestall their conversion to inactive forms of CoA and acyl carrier protein. This Arabidopsis thaliana (Mouse-ear cress) protein is Pantothenate kinase 2 (PANK2).